The chain runs to 247 residues: Sugar fermentation stimulation protein homolog (247 aa).

The protein belongs to the SfsA family.

The chain is Sugar fermentation stimulation protein homolog from Methylorubrum populi (strain ATCC BAA-705 / NCIMB 13946 / BJ001) (Methylobacterium populi).